The primary structure comprises 118 residues: Ribosome-binding factor A (118 aa).

Belongs to the RbfA family. As to quaternary structure, monomer. Binds 30S ribosomal subunits, but not 50S ribosomal subunits or 70S ribosomes.

It localises to the cytoplasm. Its function is as follows. One of several proteins that assist in the late maturation steps of the functional core of the 30S ribosomal subunit. Associates with free 30S ribosomal subunits (but not with 30S subunits that are part of 70S ribosomes or polysomes). Required for efficient processing of 16S rRNA. May interact with the 5'-terminal helix region of 16S rRNA. This Streptococcus pyogenes serotype M1 protein is Ribosome-binding factor A.